The following is a 251-amino-acid chain: Protection of telomeres homolog 2 (251 aa).

Residues 221–251 (ELDNWPEGPPKTFAEAIARANNSRRPRDPPQ) are disordered.

Belongs to the telombin family.

The protein localises to the nucleus. It localises to the chromosome. Its subcellular location is the telomere. Its function is as follows. Telomeric DNA-binding protein, which binds to two or more single-stranded G-rich repeat sequences (G-strand), with high specificity to the 5'-TTAGGC-3' sequence. In addition, repeat sequence binding requires a 3' single-stranded telomeric overhang. Acts redundantly with pot-1 to negatively regulate telomerase-mediated telomere extension. Also regulates telomere length by the telomerase-independent telomere maintenance pathway called ALT (alternative lengthening of telomeres). Does not appear to have a role in anchoring telomeres to the nuclear envelope. In Caenorhabditis elegans, this protein is Protection of telomeres homolog 2.